A 458-amino-acid polypeptide reads, in one-letter code: Ammonium transporter Rh type B (458 aa).

Over 1-13 (MAGSSRRAGGRRL) the chain is Cytoplasmic. A helical membrane pass occupies residues 14–34 (QLPLLCLLLQGATAILFAVFV). The Extracellular portion of the chain corresponds to 35–61 (RYNHETDAALWHWGNHSNPDNEFYFRY). N-linked (GlcNAc...) asparagine glycosylation is present at asparagine 49. Residues 62–82 (PSFQDVHTMIFVGFGFLMAFL) traverse the membrane as a helical segment. Residues 83–86 (QRYG) are Cytoplasmic-facing. Residues 87 to 107 (FSSVGFTFLLAAFALQWSTLV) traverse the membrane as a helical segment. Residues 108–124 (QGFLHTFHGGHIHIGVE) are Extracellular-facing. The helical transmembrane segment at 125–145 (SMINADFCAGAVLISFGAILG) threads the bilayer. At 146-149 (KTGP) the chain is on the cytoplasmic side. A helical membrane pass occupies residues 150–170 (AQLLLMALLEVVLFGLNEFVL). Residues 171–178 (LSLLGVKD) lie on the Extracellular side of the membrane. A helical transmembrane segment spans residues 179–201 (AGGSMTIHTFGAYFGLVLSRVLY). The Cytoplasmic segment spans residues 202 to 219 (RPQLEKSKHRQSSVYHSD). The helical transmembrane segment at 220–240 (LFAMIGTIFLWIFWPSFNSAP) threads the bilayer. Residues 241 to 251 (TPLGDGQHRTA) are Extracellular-facing. The helical transmembrane segment at 252–272 (LNTYYSLTASTLSTFALSALV) threads the bilayer. Topologically, residues 273–282 (GRDGRLDMVH) are cytoplasmic. A helical membrane pass occupies residues 283-303 (VQNAALAGGVVVGTSAEMMLT). Proline 304 is a topological domain (extracellular). The chain crosses the membrane as a helical span at residues 305-325 (FGALAAGFLAGTVSTLGFKFF). Topologically, residues 326–346 (TPILESKFKIQDTCGVHNLHG) are cytoplasmic. A helical transmembrane segment spans residues 347–367 (MPGVLGALLGVLVAGLATHDS). The Extracellular segment spans residues 368-393 (YGEGLESVFPLIAEGQRSSTSQALHQ). The chain crosses the membrane as a helical span at residues 394–414 (LFGLFVTLIFASVGGGLGGLL). The Cytoplasmic segment spans residues 415–458 (LRLPFLDSPPDSQCYEDQIYWEVPEEHADLAQGSLRPEEPDTQA). Residues 416–424 (RLPFLDSPP) form an interaction with ANK3 region. A Basolateral sorting signal motif is present at residues 429–432 (YEDQ).

The protein belongs to the ammonium transporter (TC 2.A.49) family. Rh subfamily. Interacts (via C-terminus) with ANK2 and ANK3; required for targeting to the basolateral membrane. Post-translationally, N-glycosylated.

Its subcellular location is the cell membrane. The protein localises to the basolateral cell membrane. It catalyses the reaction NH4(+)(in) = NH4(+)(out). It carries out the reaction methylamine(out) = methylamine(in). The catalysed reaction is CO2(out) = CO2(in). Its function is as follows. Ammonium transporter involved in the maintenance of acid-base homeostasis. Transports ammonium and its related derivative methylammonium across the basolateral plasma membrane of epithelial cells likely contributing to renal transepithelial ammonia transport and ammonia metabolism. May transport either NH4(+) or NH3 ammonia species predominantly mediating an electrogenic NH4(+) transport. May act as a CO2 channel providing for renal acid secretion. The polypeptide is Ammonium transporter Rh type B (RHBG) (Sus scrofa (Pig)).